Here is a 127-residue protein sequence, read N- to C-terminus: Major sperm protein isoform beta (127 aa).

Ala2 carries the N-acetylalanine modification. Residues 9–126 (DINTQPGSKI…RRKNLPIEYN (118 aa)) enclose the MSP domain.

As to quaternary structure, forms filaments 10 nm wide, with a characteristic substructure repeating axially at 9 nm. As to expression, sperm.

Its subcellular location is the cell projection. It is found in the pseudopodium. It localises to the cytoplasm. The protein resides in the cytoskeleton. Its function is as follows. Central component in molecular interactions underlying sperm crawling. Forms an extensive filament system that extends from sperm villipoda, along the leading edge of the pseudopod. In Ascaris suum (Pig roundworm), this protein is Major sperm protein isoform beta.